We begin with the raw amino-acid sequence, 644 residues long: Exoribonuclease 2 (644 aa).

The 328-residue stretch at 189–516 (REDLTALDFV…NHRLLKAVIK (328 aa)) folds into the RNB domain. Positions 561 to 643 (DTRFAAEIVD…ETRSIIARPV (83 aa)) constitute an S1 motif domain.

This sequence belongs to the RNR ribonuclease family. RNase II subfamily.

It is found in the cytoplasm. The catalysed reaction is Exonucleolytic cleavage in the 3'- to 5'-direction to yield nucleoside 5'-phosphates.. Functionally, involved in mRNA degradation. Hydrolyzes single-stranded polyribonucleotides processively in the 3' to 5' direction. In Escherichia coli O17:K52:H18 (strain UMN026 / ExPEC), this protein is Exoribonuclease 2.